Reading from the N-terminus, the 492-residue chain is Catalase isozyme 1 (492 aa).

Residues histidine 65 and asparagine 138 contribute to the active site. Tyrosine 348 contributes to the heme binding site.

It belongs to the catalase family. As to quaternary structure, homotetramer. The cofactor is heme.

The protein resides in the peroxisome. The protein localises to the glyoxysome. The catalysed reaction is 2 H2O2 = O2 + 2 H2O. Functionally, occurs in almost all aerobically respiring organisms and serves to protect cells from the toxic effects of hydrogen peroxide. The chain is Catalase isozyme 1 (CAT1) from Solanum tuberosum (Potato).